The primary structure comprises 459 residues: Minor capsid protein L2 (459 aa).

The Nuclear localization signal motif lies at 1–12 (MAHSRARRRKRA). Cysteines 21 and 27 form a disulfide. Positions 442 to 450 (FARKRRKRI) match the Nuclear localization signal motif.

It belongs to the papillomaviridae L2 protein family. As to quaternary structure, interacts with major capsid protein L1. Interacts with E2; this interaction inhibits E2 transcriptional activity but not the DNA replication function E2. Interacts with host GADD45GIP1. Interacts with host HSPA8; this interaction is required for L2 nuclear translocation. Interacts with host importins KPNB2 and KPNB3. Forms a complex with importin alpha2-beta1 heterodimers via interaction with the importin alpha2 adapter. Interacts with host DYNLT1; this interaction is essential for virus intracellular transport during entry. Interacts (via C-terminus) with host retromer subunits VPS35 and VPS29. Post-translationally, highly phosphorylated.

Its subcellular location is the virion. It localises to the host nucleus. The protein localises to the host early endosome. The protein resides in the host Golgi apparatus. Functionally, minor protein of the capsid that localizes along the inner surface of the virion, within the central cavities beneath the L1 pentamers. Plays a role in capsid stabilization through interaction with the major capsid protein L1. Once the virion enters the host cell, L2 escorts the genomic DNA into the nucleus by promoting escape from the endosomal compartments and traffic through the host Golgi network. Mechanistically, the C-terminus of L2 possesses a cell-penetrating peptide that protudes from the host endosome, interacts with host cytoplasmic retromer cargo and thereby mediates the capsid delivery to the host trans-Golgi network. Plays a role through its interaction with host dynein in the intracellular microtubule-dependent transport of viral capsid toward the nucleus. Mediates the viral genome import into the nucleus through binding to host importins. Once within the nucleus, L2 localizes viral genomes to host PML bodies in order to activate early gene expression for establishment of infection. Later on, promotes late gene expression by interacting with the viral E2 protein and by inhibiting its transcriptional activation functions. During virion assembly, encapsidates the genome by direct interaction with the viral DNA. This Homo sapiens (Human) protein is Minor capsid protein L2.